The sequence spans 312 residues: Protein atonal (312 aa).

Disordered regions lie at residues 136 to 174 (SNVGTCKTIPASAGPKPKRSYTKKNQPSTTATSTPTAAA) and 220 to 248 (NDGSFDLADGENQDAAAGGSGKKRRGKQI). The span at 162 to 174 (PSTTATSTPTAAA) shows a compositional bias: low complexity. Positions 255–307 (KRRLAANARERRRMQNLNQAFDRLRQYLPCLGNDRQLSKHETLQMAQTYISAL) constitute a bHLH domain.

In terms of assembly, efficient DNA binding requires dimerization with another bHLH protein. Forms a heterodimer with Daughterless. As to expression, proneural clusters and sense organ precursors of the chordotonal organs, optic furrow of the eye-antennal disk and developing brain lobe.

It is found in the nucleus. Functionally, developmental protein involved in neurogenesis. Required for the formation of chordotonal organs and photoreceptors. Seems to bind to E boxes. Specifically required for the photoreceptor R8 selection. This Drosophila melanogaster (Fruit fly) protein is Protein atonal (ato).